A 422-amino-acid chain; its full sequence is Glucose-1-phosphate adenylyltransferase (422 aa).

Alpha-D-glucose 1-phosphate-binding positions include Y110, G175, 190–191 (EK), and S208.

Belongs to the bacterial/plant glucose-1-phosphate adenylyltransferase family. As to quaternary structure, homotetramer.

The catalysed reaction is alpha-D-glucose 1-phosphate + ATP + H(+) = ADP-alpha-D-glucose + diphosphate. The protein operates within glycan biosynthesis; glycogen biosynthesis. In terms of biological role, involved in the biosynthesis of ADP-glucose, a building block required for the elongation reactions to produce glycogen. Catalyzes the reaction between ATP and alpha-D-glucose 1-phosphate (G1P) to produce pyrophosphate and ADP-Glc. In Hydrogenovibrio crunogenus (strain DSM 25203 / XCL-2) (Thiomicrospira crunogena), this protein is Glucose-1-phosphate adenylyltransferase.